Reading from the N-terminus, the 446-residue chain is Exodeoxyribonuclease 7 large subunit (446 aa).

The protein belongs to the XseA family. Heterooligomer composed of large and small subunits.

The protein localises to the cytoplasm. The catalysed reaction is Exonucleolytic cleavage in either 5'- to 3'- or 3'- to 5'-direction to yield nucleoside 5'-phosphates.. In terms of biological role, bidirectionally degrades single-stranded DNA into large acid-insoluble oligonucleotides, which are then degraded further into small acid-soluble oligonucleotides. The polypeptide is Exodeoxyribonuclease 7 large subunit (Streptococcus thermophilus (strain ATCC BAA-250 / LMG 18311)).